Reading from the N-terminus, the 184-residue chain is Adenine phosphoribosyltransferase (184 aa).

This sequence belongs to the purine/pyrimidine phosphoribosyltransferase family. In terms of assembly, homodimer.

It is found in the cytoplasm. It carries out the reaction AMP + diphosphate = 5-phospho-alpha-D-ribose 1-diphosphate + adenine. It participates in purine metabolism; AMP biosynthesis via salvage pathway; AMP from adenine: step 1/1. In terms of biological role, catalyzes a salvage reaction resulting in the formation of AMP, that is energically less costly than de novo synthesis. The chain is Adenine phosphoribosyltransferase from Mycobacterium marinum (strain ATCC BAA-535 / M).